Consider the following 313-residue polypeptide: Fucose-specific lectin (313 aa).

Tandem repeats lie at residues 5–57 (FLYT…VIGE), 58–109 (AKLF…VGVK), 110–162 (VGSN…SFGS), 163–208 (TVPG…FSAS), 209–260 (ASAG…RPTP), and 261–304 (SLPD…IGAV). The 6 X approximate tandem repeats stretch occupies residues 5–304 (FLYTSKIAAI…SGKGWSIGAV (300 aa)). Arginine 25, glutamate 37, arginine 78, glutamate 90, tryptophan 98, glutamine 102, arginine 132, glutamate 147, and tryptophan 154 together coordinate beta-L-fucose. Residues arginine 78 and glutamate 90 each contribute to the alpha-L-fucose site. Glutamine 102 serves as a coordination point for alpha-L-fucose. The alpha-L-fucose site is built by tryptophan 154, arginine 180, and glutamate 192. A beta-L-fucose-binding site is contributed by tryptophan 200. Glycine 204 serves as a coordination point for alpha-L-fucose. Positions 227 and 239 each coordinate beta-L-fucose. Tryptophan 246 provides a ligand contact to alpha-L-fucose. Tryptophan 299 is a beta-L-fucose binding site.

This sequence belongs to the fungal fucose-specific lectin family. In terms of assembly, forms homodimers. The two AAL monomers are associated via interactions between N-terminal and C-terminal peptides. Tyr-7 interacts via aromatic ring stacking with its counterpart on the other monomer, whereas Ser-284 interacts via hydrogen bonding with Asp-264 on the other monomer.

In terms of biological role, lectin that specifically binds to L-fucose. Has strongest preference for the alpha-1,6-fucosylated chain (core fucose) on glycoproteins among alpha-1,2-, alpha-1,3-, alpha-1,4-, and alpha-1,6-fucosylated chains. Might play a role in the differentiation of the fruiting body. Exhibits antifungal activity against Mucor racemosus and thus could act as an antifungal protein in natural ecosystems. This is Fucose-specific lectin from Aleuria aurantia (Orange peel mushroom).